Consider the following 60-residue polypeptide: Large ribosomal subunit protein bL32 (60 aa).

Residues 1-20 (MACPKKKTSKSKRSMRRAAW) are compositionally biased toward basic residues. Residues 1 to 22 (MACPKKKTSKSKRSMRRAAWKR) form a disordered region.

The protein belongs to the bacterial ribosomal protein bL32 family.

The sequence is that of Large ribosomal subunit protein bL32 from Thermosynechococcus vestitus (strain NIES-2133 / IAM M-273 / BP-1).